A 221-amino-acid polypeptide reads, in one-letter code: Ras-related protein Rab-27A (221 aa).

Serine 2 is modified (N-acetylserine). Serine 2 carries the phosphoserine modification. A GTP-binding site is contributed by 16–24 (GDSGVGKTS). Positions 38 to 46 (FITTVGIDF) match the Effector region motif. GTP is bound by residues 74 to 78 (DTAGQ), 133 to 136 (NKSD), and 163 to 165 (SAA). Cysteine 123 and cysteine 188 are disulfide-bonded. The interval 202-221 (NGHTSADPLNEEKEKGSCGC) is disordered. Residues 211–221 (NEEKEKGSCGC) are compositionally biased toward basic and acidic residues. 2 S-geranylgeranyl cysteine lipidation sites follow: cysteine 219 and cysteine 221. At cysteine 221 the chain carries Cysteine methyl ester.

It belongs to the small GTPase superfamily. Rab family. Binds SYTL1, SLAC2B, MYRIP, SYTL3, SYTL4 and SYTL5. Interacts with RPH3A and RPH3A. Binds MLPH and SYTL2. Interacts with UNC13D. Does not interact with the BLOC-3 complex (heterodimer of HPS1 and HPS4). Interacts (GDP-bound form preferentially) with DENND10.

Its subcellular location is the membrane. The protein resides in the melanosome. It is found in the late endosome. It localises to the lysosome. The catalysed reaction is GTP + H2O = GDP + phosphate + H(+). With respect to regulation, regulated by guanine nucleotide exchange factors (GEFs) which promote the exchange of bound GDP for free GTP, GTPase activating proteins (GAPs) which increase the GTP hydrolysis activity, and GDP dissociation inhibitors which inhibit the dissociation of the nucleotide from the GTPase. Activated by GEFs such as DENND10. In terms of biological role, small GTPase which cycles between active GTP-bound and inactive GDP-bound states. In its active state, binds to a variety of effector proteins to regulate homeostasis of late endocytic pathway, including endosomal positioning, maturation and secretion. Plays a role in cytotoxic granule exocytosis in lymphocytes. Required for both granule maturation and granule docking and priming at the immunologic synapse. The chain is Ras-related protein Rab-27A (RAB27A) from Sus scrofa (Pig).